The sequence spans 272 residues: Indole-3-glycerol phosphate synthase (272 aa).

The protein belongs to the TrpC family.

It carries out the reaction 1-(2-carboxyphenylamino)-1-deoxy-D-ribulose 5-phosphate + H(+) = (1S,2R)-1-C-(indol-3-yl)glycerol 3-phosphate + CO2 + H2O. The protein operates within amino-acid biosynthesis; L-tryptophan biosynthesis; L-tryptophan from chorismate: step 4/5. The sequence is that of Indole-3-glycerol phosphate synthase from Mycolicibacterium vanbaalenii (strain DSM 7251 / JCM 13017 / BCRC 16820 / KCTC 9966 / NRRL B-24157 / PYR-1) (Mycobacterium vanbaalenii).